Consider the following 327-residue polypeptide: Mitochondrial coenzyme A transporter SLC25A42 (327 aa).

3 Solcar repeats span residues 34-120, 132-217, and 227-315; these read KSVL…YKKL, LTPI…LKKL, and PYTF…TQIL. Transmembrane regions (helical) follow at residues 36-56, 92-112, 138-158, 192-209, 233-253, and 296-316; these read VLNS…AVAP, LWRG…IQFC, LLAG…LDLV, GFTP…ISFF, LLFG…LDVV, and VKGP…QILL.

Belongs to the mitochondrial carrier (TC 2.A.29) family.

The protein localises to the mitochondrion inner membrane. The catalysed reaction is ADP(out) + CoA(in) = ADP(in) + CoA(out). It carries out the reaction 3'-dephospho-CoA(in) + ADP(out) = 3'-dephospho-CoA(out) + ADP(in). It catalyses the reaction adenosine 3',5'-bisphosphate(in) + ADP(out) = adenosine 3',5'-bisphosphate(out) + ADP(in). The enzyme catalyses AMP(in) + ADP(out) = AMP(out) + ADP(in). The catalysed reaction is dADP(in) + ADP(out) = dADP(out) + ADP(in). It carries out the reaction ADP(in) + ATP(out) = ADP(out) + ATP(in). Functionally, mitochondrial carrier mediating the transport of coenzyme A (CoA) in mitochondria in exchange for intramitochondrial (deoxy)adenine nucleotides and adenosine 3',5'-diphosphate. This Xenopus laevis (African clawed frog) protein is Mitochondrial coenzyme A transporter SLC25A42 (slc25a42).